Here is a 289-residue protein sequence, read N- to C-terminus: Acetyl-coenzyme A carboxylase carboxyl transferase subunit beta 2 (289 aa).

The 265-residue stretch at V25–E289 folds into the CoA carboxyltransferase N-terminal domain. Residues C29, C32, C48, and C51 each coordinate Zn(2+). The C4-type zinc-finger motif lies at C29 to C51.

Belongs to the AccD/PCCB family. As to quaternary structure, acetyl-CoA carboxylase is a heterohexamer composed of biotin carboxyl carrier protein (AccB), biotin carboxylase (AccC) and two subunits each of ACCase subunit alpha (AccA) and ACCase subunit beta (AccD). Zn(2+) is required as a cofactor.

Its subcellular location is the cytoplasm. The enzyme catalyses N(6)-carboxybiotinyl-L-lysyl-[protein] + acetyl-CoA = N(6)-biotinyl-L-lysyl-[protein] + malonyl-CoA. It participates in lipid metabolism; malonyl-CoA biosynthesis; malonyl-CoA from acetyl-CoA: step 1/1. Component of the acetyl coenzyme A carboxylase (ACC) complex. Biotin carboxylase (BC) catalyzes the carboxylation of biotin on its carrier protein (BCCP) and then the CO(2) group is transferred by the transcarboxylase to acetyl-CoA to form malonyl-CoA. In Vibrio campbellii (strain ATCC BAA-1116), this protein is Acetyl-coenzyme A carboxylase carboxyl transferase subunit beta 2.